A 434-amino-acid polypeptide reads, in one-letter code: Putative nuclease OPG089 (434 aa).

Residues aspartate 33, aspartate 74, glutamate 168, aspartate 170, aspartate 196, and aspartate 198 each contribute to the Mg(2+) site.

The protein belongs to the XPG/RAD2 endonuclease family. FEN1 subfamily. The cofactor is Mg(2+).

Its subcellular location is the virion. Putative nuclease that seems to be required for double-strand break repair, homologous recombination, and production of full-length viral genomic DNA. The polypeptide is Putative nuclease OPG089 (OPG089) (Vaccinia virus (strain Copenhagen) (VACV)).